The sequence spans 117 residues: Photosystem II reaction center Psb28 protein (117 aa).

Belongs to the Psb28 family. As to quaternary structure, part of the photosystem II complex.

It localises to the cellular thylakoid membrane. This Prochlorococcus marinus (strain AS9601) protein is Photosystem II reaction center Psb28 protein.